The sequence spans 494 residues: Bifunctional protein HldE (494 aa).

The tract at residues 1–334 is ribokinase; sequence MPTPILDFDA…RKILPHAYLA (334 aa). 209–212 serves as a coordination point for ATP; it reads NRKE. D279 is a catalytic residue. Positions 362 to 494 are cytidylyltransferase; sequence FTNGCFDILH…LVHRARGGAK (133 aa).

It in the N-terminal section; belongs to the carbohydrate kinase PfkB family. This sequence in the C-terminal section; belongs to the cytidylyltransferase family. In terms of assembly, homodimer.

The catalysed reaction is D-glycero-beta-D-manno-heptose 7-phosphate + ATP = D-glycero-beta-D-manno-heptose 1,7-bisphosphate + ADP + H(+). It carries out the reaction D-glycero-beta-D-manno-heptose 1-phosphate + ATP + H(+) = ADP-D-glycero-beta-D-manno-heptose + diphosphate. It functions in the pathway nucleotide-sugar biosynthesis; ADP-L-glycero-beta-D-manno-heptose biosynthesis; ADP-L-glycero-beta-D-manno-heptose from D-glycero-beta-D-manno-heptose 7-phosphate: step 1/4. It participates in nucleotide-sugar biosynthesis; ADP-L-glycero-beta-D-manno-heptose biosynthesis; ADP-L-glycero-beta-D-manno-heptose from D-glycero-beta-D-manno-heptose 7-phosphate: step 3/4. Its function is as follows. Catalyzes the phosphorylation of D-glycero-D-manno-heptose 7-phosphate at the C-1 position to selectively form D-glycero-beta-D-manno-heptose-1,7-bisphosphate. Catalyzes the ADP transfer from ATP to D-glycero-beta-D-manno-heptose 1-phosphate, yielding ADP-D-glycero-beta-D-manno-heptose. The chain is Bifunctional protein HldE from Bradyrhizobium diazoefficiens (strain JCM 10833 / BCRC 13528 / IAM 13628 / NBRC 14792 / USDA 110).